Here is a 183-residue protein sequence, read N- to C-terminus: ATP synthase subunit b, chloroplastic (183 aa).

Residues 27 to 49 traverse the membrane as a helical segment; sequence LATNLINLTVVVGVLIFFGKGVL.

Belongs to the ATPase B chain family. In terms of assembly, F-type ATPases have 2 components, F(1) - the catalytic core - and F(0) - the membrane proton channel. F(1) has five subunits: alpha(3), beta(3), gamma(1), delta(1), epsilon(1). F(0) has four main subunits: a(1), b(1), b'(1) and c(10-14). The alpha and beta chains form an alternating ring which encloses part of the gamma chain. F(1) is attached to F(0) by a central stalk formed by the gamma and epsilon chains, while a peripheral stalk is formed by the delta, b and b' chains.

The protein resides in the plastid. It is found in the chloroplast thylakoid membrane. In terms of biological role, f(1)F(0) ATP synthase produces ATP from ADP in the presence of a proton or sodium gradient. F-type ATPases consist of two structural domains, F(1) containing the extramembraneous catalytic core and F(0) containing the membrane proton channel, linked together by a central stalk and a peripheral stalk. During catalysis, ATP synthesis in the catalytic domain of F(1) is coupled via a rotary mechanism of the central stalk subunits to proton translocation. Its function is as follows. Component of the F(0) channel, it forms part of the peripheral stalk, linking F(1) to F(0). The polypeptide is ATP synthase subunit b, chloroplastic (Lolium perenne (Perennial ryegrass)).